Reading from the N-terminus, the 82-residue chain is Small ribosomal subunit protein bS18 (82 aa).

The protein belongs to the bacterial ribosomal protein bS18 family. As to quaternary structure, part of the 30S ribosomal subunit. Forms a tight heterodimer with protein bS6.

Functionally, binds as a heterodimer with protein bS6 to the central domain of the 16S rRNA, where it helps stabilize the platform of the 30S subunit. This is Small ribosomal subunit protein bS18 from Sinorhizobium fredii (strain NBRC 101917 / NGR234).